The primary structure comprises 413 residues: Arginine biosynthesis bifunctional protein ArgJ (413 aa).

Substrate contacts are provided by Thr-160, Lys-186, Thr-197, Glu-284, Asn-408, and Ser-413. The active-site Nucleophile is Thr-197.

It belongs to the ArgJ family. Heterotetramer of two alpha and two beta chains.

It localises to the cytoplasm. It catalyses the reaction N(2)-acetyl-L-ornithine + L-glutamate = N-acetyl-L-glutamate + L-ornithine. It carries out the reaction L-glutamate + acetyl-CoA = N-acetyl-L-glutamate + CoA + H(+). It functions in the pathway amino-acid biosynthesis; L-arginine biosynthesis; L-ornithine and N-acetyl-L-glutamate from L-glutamate and N(2)-acetyl-L-ornithine (cyclic): step 1/1. Its pathway is amino-acid biosynthesis; L-arginine biosynthesis; N(2)-acetyl-L-ornithine from L-glutamate: step 1/4. Catalyzes two activities which are involved in the cyclic version of arginine biosynthesis: the synthesis of N-acetylglutamate from glutamate and acetyl-CoA as the acetyl donor, and of ornithine by transacetylation between N(2)-acetylornithine and glutamate. This chain is Arginine biosynthesis bifunctional protein ArgJ, found in Burkholderia pseudomallei (strain K96243).